A 188-amino-acid polypeptide reads, in one-letter code: PRA1 family protein F4 (188 aa).

Residues 1–13 (MANNDEITTSSHA) are compositionally biased toward polar residues. Residues 1–25 (MANNDEITTSSHASPAVNHESISRA) form a disordered region. 4 helical membrane-spanning segments follow: residues 67-86 (YFRS…SLIW), 90-107 (SLIV…LYFL), 119-139 (IDDR…LLLT), and 142-162 (TFNI…HAVI).

The protein belongs to the PRA1 family.

It localises to the endosome membrane. Its function is as follows. May be involved in both secretory and endocytic intracellular trafficking in the endosomal/prevacuolar compartments. This is PRA1 family protein F4 (PRA1F4) from Arabidopsis thaliana (Mouse-ear cress).